Reading from the N-terminus, the 320-residue chain is Dual oxidase maturation factor 2 (320 aa).

At 1-21 the chain is on the extracellular side; sequence MTLWNGVLPFYPQPRHAAGFS. A helical transmembrane segment spans residues 22–42; it reads VPLLIVILVFLALAASFLLIL. Residues 43-56 lie on the Cytoplasmic side of the membrane; it reads PGIRGHSRWFWLVR. A helical transmembrane segment spans residues 57–77; sequence VLLSLFIGAEIVAVHFSAEWF. Residues 78–183 are Extracellular-facing; that stretch reads VGTVNTNTSY…HLAGHYASAT (106 aa). N-linked (GlcNAc...) asparagine glycosylation is found at Asn-84, Asn-109, and Asn-121. Residues 184-204 traverse the membrane as a helical segment; sequence LWVAFCFWLLSNVLLSTPAPL. The Cytoplasmic portion of the chain corresponds to 205–206; sequence YG. A helical transmembrane segment spans residues 207 to 227; sequence GLALLTTGAFALFGVFALASI. At 228-247 the chain is on the extracellular side; that stretch reads SSVPLCPLRLGSSALTTQYG. Residues 248-268 traverse the membrane as a helical segment; the sequence is AAFWVTLATGVLCLFLGGAVV. Residues 269-320 lie on the Cytoplasmic side of the membrane; the sequence is SLQYVRPSALRTLLDQSAKDCSQERGGSPLILGDPLHKQAALPDLKCITTNL.

The protein belongs to the DUOXA family. In terms of assembly, heterodimer with DUXA2; disulfide-linked. Interacts with CSNK1G2. N-glycosylated. In terms of tissue distribution, specifically expressed in thyroid. Also detected in salivary glands.

The protein localises to the endoplasmic reticulum membrane. In terms of biological role, required for the maturation and the transport from the endoplasmic reticulum to the plasma membrane of functional DUOX2. May play a role in thyroid hormone synthesis. This is Dual oxidase maturation factor 2 (DUOXA2) from Homo sapiens (Human).